The chain runs to 283 residues: MAHLGAHFAFRSRWQKTDDELCRHSMSFILHKAIRNDFFQSYLYLLEKIPLVKLYALTSQVIDGEMQFYARAKLFYQEVPATEEGMMGNFIELSNPDIQASREFLRKFVGGPGRAGTGCALDCGSGIGRVSKHVLLPVFSSVELVDMMESFLLEAQSYLQVNENKVESYHCYSLQEFTPHLGRYDVIWIQWVSGYLTDKDLLAFLSRCRDGLKENGVIILKDNVAREGCIFDLSDSSVTRDMDILRSLIRKSGLVVLGQEKQEGFPEQCVPVWMFALHSDRHS.

S-adenosyl-L-methionine contacts are provided by residues glycine 124, arginine 129, aspartate 146, 174–175 (LQ), and glutamine 190.

This sequence belongs to the methyltransferase superfamily. NTM1 family.

Its subcellular location is the nucleus. It catalyses the reaction N-terminal L-alanyl-L-prolyl-L-lysyl-[protein] + S-adenosyl-L-methionine = N-terminal N-methyl-L-alanyl-L-prolyl-L-lysyl-[protein] + S-adenosyl-L-homocysteine + H(+). The catalysed reaction is N-terminal L-prolyl-L-prolyl-L-lysyl-[protein] + S-adenosyl-L-methionine = N-terminal N-methyl-L-prolyl-L-prolyl-L-lysyl-[protein] + S-adenosyl-L-homocysteine + H(+). It carries out the reaction N-terminal L-seryl-L-prolyl-L-lysyl-[protein] + S-adenosyl-L-methionine = N-terminal N-methyl-L-seryl-L-prolyl-L-lysyl-[protein] + S-adenosyl-L-homocysteine + H(+). Alpha N-methyltransferase that methylates the N-terminus of target proteins containing the N-terminal motif [Ala/Pro/Ser]-Pro-Lys when the initiator Met is cleaved. Specifically catalyzes monomethylation of exposed alpha-amino group of Ala or Ser residue in the [Ala/Ser]-Pro-Lys motif and Pro in the Pro-Pro-Lys motif. Predominantly functions as a mono-methyltransferase but is also able to di-/tri-methylate the GPKRIA peptide and di-methylate the PPKRIA peptide (in vitro). May activate NTMT1 by priming its substrates for trimethylation. The chain is N-terminal Xaa-Pro-Lys N-methyltransferase 2 (Ntmt2) from Rattus norvegicus (Rat).